A 258-amino-acid chain; its full sequence is Uridylate cyclase (258 aa).

Residues 50-190 (AAIFIDLRGS…DVVNKASKMC (141 aa)) form the Guanylate cyclase domain. F53 contributes to the a ribonucleoside 5'-triphosphate binding site. Mn(2+)-binding residues include D55 and D102.

Belongs to the adenylyl cyclase class-4/guanylyl cyclase family. Pyrimidine cyclase subfamily. As to quaternary structure, homodimer. Requires Mn(2+) as cofactor.

It is found in the cytoplasm. The enzyme catalyses UTP = 3',5'-cyclic UMP + diphosphate. Functionally, pycsar (pyrimidine cyclase system for antiphage resistance) provides immunity against bacteriophage. The pyrimidine cyclase (PycC) synthesizes cyclic nucleotides in response to infection; these serve as specific second messenger signals. The signals activate the adjacent effector, leading to bacterial cell death and abortive phage infection. A clade C Pycsar system. In terms of biological role, the pyrimidine cyclase gene of a two-gene Pycsar system, weakly generates cyclic UMP (cUMP) from UTP, has little to no activity on ATP, CTP or GTP. Expression of this and adjacent effector GmPycTM (AC P0DV43) probably confers resistance to bacteriophage. The genes are probably only expressed in response to bacteriophage infection. The protein is Uridylate cyclase of Gulbenkiania mobilis.